Reading from the N-terminus, the 35-residue chain is Cytochrome c-550 (35 aa).

Residues Cys17, Cys20, and His21 each coordinate heme c.

Post-translationally, binds 1 heme c group covalently per subunit.

Monoheme cytochrome which functions as an electron carrier in the reduction of nitrite by membrane vesicles. This chain is Cytochrome c-550, found in Virgibacillus halodenitrificans (Bacillus halodenitrificans).